Reading from the N-terminus, the 1690-residue chain is DNA-directed RNA polymerase subunit beta' (1690 aa).

4 residues coordinate Zn(2+): cysteine 63, cysteine 65, cysteine 78, and cysteine 81. Aspartate 753, aspartate 755, and aspartate 757 together coordinate Mg(2+). The Zn(2+) site is built by cysteine 1107, cysteine 1295, cysteine 1302, and cysteine 1305.

This sequence belongs to the RNA polymerase beta' chain family. In terms of assembly, the RNAP catalytic core consists of 2 alpha, 1 beta, 1 beta' and 1 omega subunit. When a sigma factor is associated with the core the holoenzyme is formed, which can initiate transcription. Requires Mg(2+) as cofactor. It depends on Zn(2+) as a cofactor.

The enzyme catalyses RNA(n) + a ribonucleoside 5'-triphosphate = RNA(n+1) + diphosphate. In terms of biological role, DNA-dependent RNA polymerase catalyzes the transcription of DNA into RNA using the four ribonucleoside triphosphates as substrates. In Thermotoga petrophila (strain ATCC BAA-488 / DSM 13995 / JCM 10881 / RKU-1), this protein is DNA-directed RNA polymerase subunit beta'.